The following is a 648-amino-acid chain: Replication restart protein PriA (648 aa).

One can recognise a Helicase ATP-binding domain in the interval 131 to 297; sequence TILNESNKPT…EIGKYQLVTL (167 aa). Residue 144-151 participates in ATP binding; it reads GVTGSGKT. The DEAH box motif lies at 240-243; that stretch reads DEEH. Residues Cys358, Cys361, Cys367, Cys370, Cys385, Cys388, Cys398, and Cys401 each coordinate Zn(2+). A Helicase C-terminal domain is found at 393 to 548; it reads KIFSSCPECL…SFFANELEIR (156 aa).

The protein belongs to the helicase family. PriA subfamily. As to quaternary structure, component of the replication restart primosome. Requires Zn(2+) as cofactor.

The enzyme catalyses Couples ATP hydrolysis with the unwinding of duplex DNA by translocating in the 3'-5' direction.. It carries out the reaction ATP + H2O = ADP + phosphate + H(+). Initiates the restart of stalled replication forks, which reloads the replicative helicase on sites other than the origin of replication. Recognizes and binds to abandoned replication forks and remodels them to uncover a helicase loading site. Promotes assembly of the primosome at these replication forks. The protein is Replication restart protein PriA of Rickettsia felis (strain ATCC VR-1525 / URRWXCal2) (Rickettsia azadi).